A 266-amino-acid chain; its full sequence is MAEEIKNLRDEYVYKAKLAEQAERYDEMAEAMKNLVENCLDEQQPKDELSVEERNLLSVAYKNAVGARRASWRIISSVEQKELSKQHMQNKALAAEYRQKVEEELNKICHDILQLLTDKLIPKTSDSESKVFYYKMKGDYYRYISEFSGEEGKKQAADQAQESYQKATETAEGHSPATHPIRLGLALNYSVFFYEILNLPQQACEMAKRAFDDAITEFDNVSEDSYKDSTLIMQLLRDNLTLWTSDLQADQQQQEGGEKPAEQADQ.

The disordered stretch occupies residues 154–177 (KQAADQAQESYQKATETAEGHSPA). Residues 158–168 (DQAQESYQKAT) are compositionally biased toward polar residues.

It belongs to the 14-3-3 family.

The protein is 14-3-3 protein homolog of Neospora caninum (Coccidian parasite).